The primary structure comprises 392 residues: Formate-dependent phosphoribosylglycinamide formyltransferase (392 aa).

Residues 22–23 (EL) and E82 contribute to the N(1)-(5-phospho-beta-D-ribosyl)glycinamide site. Residues R114, K155, 160 to 165 (SSGKGQ), 195 to 198 (EGEV), and E203 each bind ATP. The 190-residue stretch at 119-308 (RLAAETLALP…EFALHVRAFL (190 aa)) folds into the ATP-grasp domain. Positions 267 and 279 each coordinate Mg(2+). N(1)-(5-phospho-beta-D-ribosyl)glycinamide is bound by residues D286, K355, and 362–363 (RR).

Belongs to the PurK/PurT family. In terms of assembly, homodimer.

It catalyses the reaction N(1)-(5-phospho-beta-D-ribosyl)glycinamide + formate + ATP = N(2)-formyl-N(1)-(5-phospho-beta-D-ribosyl)glycinamide + ADP + phosphate + H(+). The protein operates within purine metabolism; IMP biosynthesis via de novo pathway; N(2)-formyl-N(1)-(5-phospho-D-ribosyl)glycinamide from N(1)-(5-phospho-D-ribosyl)glycinamide (formate route): step 1/1. Functionally, involved in the de novo purine biosynthesis. Catalyzes the transfer of formate to 5-phospho-ribosyl-glycinamide (GAR), producing 5-phospho-ribosyl-N-formylglycinamide (FGAR). Formate is provided by PurU via hydrolysis of 10-formyl-tetrahydrofolate. The protein is Formate-dependent phosphoribosylglycinamide formyltransferase of Edwardsiella ictaluri (strain 93-146).